The sequence spans 67 residues: Conotoxin ArMLCL-012 (67 aa).

Positions 1-19 (MLCLPVFIILLLLASPAAS) are cleaved as a signal peptide. Positions 20–45 (NPLEKRIQSDLIRAALEDADTKNDPR) are excised as a propeptide. Cysteine amide is present on Cys64.

Belongs to the conotoxin T superfamily. In terms of processing, contains 2 disulfide bonds that can be either 'C1-C3, C2-C4' or 'C1-C4, C2-C3', since these disulfide connectivities have been observed for conotoxins with cysteine framework V (for examples, see AC P0DQQ7 and AC P81755). Expressed by the venom duct.

It is found in the secreted. The sequence is that of Conotoxin ArMLCL-012 from Conus arenatus (Sand-dusted cone).